A 132-amino-acid polypeptide reads, in one-letter code: AP-2 complex subunit sigma (132 aa).

Belongs to the adaptor complexes small subunit family. Adaptor protein complex 2 (AP-2) is a heterotetramer composed of two large adaptins (alpha-type and beta-type subunits), a medium adaptin (mu-type subunit AP50) and a small adaptin (sigma-type subunit AP17). As to expression, widely expressed in the embryo, endosperm, leaf and root.

The protein localises to the cell membrane. The protein resides in the membrane. It localises to the coated pit. Functionally, component of the adaptor complexes which link clathrin to receptors in coated vesicles. Clathrin-associated protein complexes are believed to interact with the cytoplasmic tails of membrane proteins, leading to their selection and concentration. AP2S1/AP17 is a subunit of the plasma membrane adaptor. The complex binds polyphosphoinositides. In Zea mays (Maize), this protein is AP-2 complex subunit sigma (AP-17).